Here is a 359-residue protein sequence, read N- to C-terminus: MLKELFVNLTILITFNYLFTHLFKERLVHKKDSISFQAVKGLACGLLGVILMVFGFTYQHSIIDLRNIPIMIAALYGGWVSTATALAMITAGRLLITMNTSALYSVIIICIAAIPSLIVSRRKKVQLKHAFYLLIITNSLISFSFYFLIDLHSYELHLYFWIISIAGGMLSLYIIDHETNAHLLFKQYKFQAHFDFLTGVYNRRKFEETTKALYQQAADTPHFQFALIYMDIDHFKTINDQYGHHEGDQVLKELGLRLKQTIRNTDPAARIGGEEFAVLLPNCSLDKAARIAERIRSTVSDAPIVLTNGDELSVTISLGAAHYPNNTEQPGSLPILADQMLYKAKETGRNRVCFSEKKE.

The next 6 membrane-spanning stretches (helical) occupy residues 4-24, 36-56, 68-88, 94-114, 129-149, and 155-175; these read ELFV…HLFK, FQAV…VFGF, IPIM…ALAM, LLIT…IAAI, HAFY…YFLI, and ELHL…LYII. One can recognise a GGDEF domain in the interval 223–357; sequence FQFALIYMDI…GRNRVCFSEK (135 aa).

Its subcellular location is the cell membrane. This is an uncharacterized protein from Bacillus subtilis (strain 168).